The sequence spans 354 residues: Uroporphyrinogen decarboxylase (354 aa).

Residues 27–31, D77, Y154, T209, and H327 each bind substrate; that span reads RQAGR.

Belongs to the uroporphyrinogen decarboxylase family. Homodimer.

It localises to the cytoplasm. It catalyses the reaction uroporphyrinogen III + 4 H(+) = coproporphyrinogen III + 4 CO2. Its pathway is porphyrin-containing compound metabolism; protoporphyrin-IX biosynthesis; coproporphyrinogen-III from 5-aminolevulinate: step 4/4. Its function is as follows. Catalyzes the decarboxylation of four acetate groups of uroporphyrinogen-III to yield coproporphyrinogen-III. The sequence is that of Uroporphyrinogen decarboxylase from Pseudomonas putida (strain ATCC 700007 / DSM 6899 / JCM 31910 / BCRC 17059 / LMG 24140 / F1).